The chain runs to 194 residues: Adenylate kinase (194 aa).

10 to 15 (GAGKGT) contributes to the ATP binding site. The NMP stretch occupies residues 30–59 (STGDMLRAAVKAETEIGKKAKAVMDAGELV). Residues Thr-31, Arg-36, 57-59 (ELV), 85-88 (GYPR), and Gln-92 contribute to the AMP site. Residues 126–142 (KRAEDAQAAGQPVRRDD) are LID. An ATP-binding site is contributed by Arg-127. Residues Arg-139 and Arg-150 each contribute to the AMP site. Ala-178 serves as a coordination point for ATP.

It belongs to the adenylate kinase family. Monomer.

It is found in the cytoplasm. The enzyme catalyses AMP + ATP = 2 ADP. It participates in purine metabolism; AMP biosynthesis via salvage pathway; AMP from ADP: step 1/1. Its function is as follows. Catalyzes the reversible transfer of the terminal phosphate group between ATP and AMP. Plays an important role in cellular energy homeostasis and in adenine nucleotide metabolism. The sequence is that of Adenylate kinase from Chelativorans sp. (strain BNC1).